We begin with the raw amino-acid sequence, 470 residues long: Putative F-box/LRR-repeat protein At3g58920 (470 aa).

The 53-residue stretch at 1 to 53 (MDRISNLPNEIICHIVSFLSAKEAAFASVLSKRWQNLFTIVQKLEFDDSVKNQ) folds into the F-box domain. 6 LRR repeats span residues 114-142 (KLEI…KLTS), 143-170 (CIFA…FLKS), 173-198 (FSDL…TIYD), 225-250 (FTYF…KYID), 287-312 (EDDP…HLST), and 342-367 (YECF…MIKG).

This Arabidopsis thaliana (Mouse-ear cress) protein is Putative F-box/LRR-repeat protein At3g58920.